A 241-amino-acid polypeptide reads, in one-letter code: uncharacterized protein (241 aa).

Residues 78 to 80, Gly111, Ile131, and 138 to 140 contribute to the S-adenosyl-L-methionine site; these read TSA and SSL.

It belongs to the class IV-like SAM-binding methyltransferase superfamily. RNA methyltransferase TrmH family.

This is an uncharacterized protein from Haemophilus influenzae (strain ATCC 51907 / DSM 11121 / KW20 / Rd).